The following is a 764-amino-acid chain: MSLTPLLQLALLLALPRSLRGKGCPSPPCECHQEDDFRVTCKDIHSIPPLPPNTQTLKFIETHLKTIPSRAFSNLPNISRIYLSIDATLQQLESQSFYNLSKMTHIEIRNTRSLTYINPGALKDLPLLKFLGIFNTGLRIFPDLTKVYSTDVFFILEITDNPYMTSIPANAFQGLCNETLTLKLYNNGFTSVQGHAFNGTKLDAVYLNKNKYLTVIDKDAFGGVFSGPTLLDVSYTSVTALPPKGLEHLKELIARNTWTLKKLPLSLSFLHLTRADLSYPSHCCAFKNQKKIRGILESLMCNESSIRSLRQRKSVNAVNGPFYQEYEEDLGDSSVGNKENSKFQDTHSNSHYYVFFEEQEDEIIGFGQELKNPQEETLQAFDSHYDYTVCGGSEDMVCTPKSDEFNPCEDIMGYRFLRIVVWFVSLLALLGNVFVLVILLTSHYKLTVPRFLMCNLAFADFCMGMYLLLIASVDLYTQSEYYNHAIDWQTGPGCNTAGFFTVFASELSVYTLTVITLERWYAITFAMRLDRKIRLRHAYAIMAGGWVCCFLLALLPLVGISSYAKVSICLPMDTETPLALAYIILVLLLNIVAFTIVCSCYVKIYITVRNPQYNPGDKDTKIAKRMAVLIFTDFMCMAPISFYALSALMNKPLITVTNSKILLVLFYPLNSCANPFLYAIFTKAFQRDVFILLSKFGFCKRQAQAYRGQRVSPKNSTGIQVQKVTQNMRQSLPNMQDDYELLENSHLTHKKHDQISKEYKQPVL.

Residues 1 to 21 (MSLTPLLQLALLLALPRSLRG) form the signal peptide. At 22–413 (KGCPSPPCEC…EFNPCEDIMG (392 aa)) the chain is on the extracellular side. A disulfide bridge links C31 with C41. N-linked (GlcNAc...) asparagine glycosylation is found at N77 and N99. LRR repeat units lie at residues 125–150 (LPLL…VYST), 151–174 (DVFF…AFQG), 176–199 (CNET…AFNG), 201–223 (KLDA…AFGG), 225–248 (FSGP…GLEH), and 250–271 (KELI…SFLH). Residues N177 and N198 are each glycosylated (N-linked (GlcNAc...) asparagine). N-linked (GlcNAc...) asparagine glycosylation occurs at N302. Sulfotyrosine is present on Y385. A helical membrane pass occupies residues 414–441 (YRFLRIVVWFVSLLALLGNVFVLVILLT). The Cytoplasmic segment spans residues 442–450 (SHYKLTVPR). The chain crosses the membrane as a helical span at residues 451 to 473 (FLMCNLAFADFCMGMYLLLIASV). Over 474–494 (DLYTQSEYYNHAIDWQTGPGC) the chain is Extracellular. A disulfide bridge connects residues C494 and C569. Residues 495–517 (NTAGFFTVFASELSVYTLTVITL) traverse the membrane as a helical segment. Topologically, residues 518-537 (ERWYAITFAMRLDRKIRLRH) are cytoplasmic. Residues 538 to 560 (AYAIMAGGWVCCFLLALLPLVGI) form a helical membrane-spanning segment. Residues 561–580 (SSYAKVSICLPMDTETPLAL) are Extracellular-facing. The chain crosses the membrane as a helical span at residues 581 to 602 (AYIILVLLLNIVAFTIVCSCYV). Residues 603-625 (KIYITVRNPQYNPGDKDTKIAKR) are Cytoplasmic-facing. Residues 626 to 649 (MAVLIFTDFMCMAPISFYALSALM) traverse the membrane as a helical segment. Over 650-660 (NKPLITVTNSK) the chain is Extracellular. Residues 661–682 (ILLVLFYPLNSCANPFLYAIFT) traverse the membrane as a helical segment. Over 683–764 (KAFQRDVFIL…ISKEYKQPVL (82 aa)) the chain is Cytoplasmic. The PDZ-binding motif lies at 762-764 (PVL).

Belongs to the G-protein coupled receptor 1 family. FSH/LSH/TSH subfamily. As to quaternary structure, interacts with heterodimer GPHA2:GPHB5; this interaction stimulates cAMP production. Interacts (via the PDZ-binding motif) with SCRIB; regulates TSHR trafficking and function. Post-translationally, glycosylated. In terms of processing, sulfated. Sulfation on Tyr-385 plays a role in thyrotropin receptor binding and activation. Expressed in thyroide cells (at protein level).

The protein resides in the cell membrane. Its subcellular location is the basolateral cell membrane. Receptor for the thyroid-stimulating hormone (TSH) or thyrotropin. Also acts as a receptor for the heterodimeric glycoprotein hormone (GPHA2:GPHB5) or thyrostimulin. The activity of this receptor is mediated by G proteins which activate adenylate cyclase. Plays a central role in controlling thyroid cell metabolism. The chain is Thyrotropin receptor (TSHR) from Sus scrofa (Pig).